A 61-amino-acid polypeptide reads, in one-letter code: Photosystem II reaction center protein K (61 aa).

Residues 1-24 (MPNILSLTCICFNSVIYPTSFFFA) constitute a propeptide that is removed on maturation. The chain crosses the membrane as a helical span at residues 32–52 (IFNPIVDFMPVIPLFFFLLAF).

Belongs to the PsbK family. As to quaternary structure, PSII is composed of 1 copy each of membrane proteins PsbA, PsbB, PsbC, PsbD, PsbE, PsbF, PsbH, PsbI, PsbJ, PsbK, PsbL, PsbM, PsbT, PsbX, PsbY, PsbZ, Psb30/Ycf12, at least 3 peripheral proteins of the oxygen-evolving complex and a large number of cofactors. It forms dimeric complexes.

The protein resides in the plastid. The protein localises to the chloroplast thylakoid membrane. In terms of biological role, one of the components of the core complex of photosystem II (PSII). PSII is a light-driven water:plastoquinone oxidoreductase that uses light energy to abstract electrons from H(2)O, generating O(2) and a proton gradient subsequently used for ATP formation. It consists of a core antenna complex that captures photons, and an electron transfer chain that converts photonic excitation into a charge separation. This is Photosystem II reaction center protein K from Triticum aestivum (Wheat).